We begin with the raw amino-acid sequence, 323 residues long: Probable cell division protein WhiA (323 aa).

A DNA-binding region (H-T-H motif) is located at residues 275–309 (TLKELGEMLTTGQVSKSGINHRLRKLDQIAERLRS).

Belongs to the WhiA family.

Its function is as follows. Involved in cell division and chromosome segregation. In Listeria monocytogenes serotype 4b (strain CLIP80459), this protein is Probable cell division protein WhiA.